The following is a 629-amino-acid chain: tRNA uridine 5-carboxymethylaminomethyl modification enzyme MnmG (629 aa).

Residues 13 to 18, Val125, and Ser180 contribute to the FAD site; that span reads GGGHAG. Residue 273–287 participates in NAD(+) binding; it reads GPRYCPSIEDKVMRF. Gln370 contributes to the FAD binding site.

Belongs to the MnmG family. Homodimer. Heterotetramer of two MnmE and two MnmG subunits. It depends on FAD as a cofactor.

It localises to the cytoplasm. In terms of biological role, NAD-binding protein involved in the addition of a carboxymethylaminomethyl (cmnm) group at the wobble position (U34) of certain tRNAs, forming tRNA-cmnm(5)s(2)U34. The chain is tRNA uridine 5-carboxymethylaminomethyl modification enzyme MnmG from Pasteurella multocida (strain Pm70).